Reading from the N-terminus, the 393-residue chain is S-adenosylmethionine synthase (393 aa).

Mg(2+) is bound at residue Glu-10. His-16 contributes to the ATP binding site. Residue Glu-44 coordinates K(+). L-methionine contacts are provided by Glu-57 and Gln-100. ATP contacts are provided by residues 168–170, 236–239, Asp-247, 253–254, Ala-270, Lys-274, and Lys-278; these read DGK, SGRF, and RK. Asp-247 is a binding site for L-methionine. Lys-278 is an L-methionine binding site.

This sequence belongs to the AdoMet synthase family. As to quaternary structure, homotetramer. It depends on Mn(2+) as a cofactor. Mg(2+) serves as cofactor. The cofactor is Co(2+). K(+) is required as a cofactor.

Its subcellular location is the cytoplasm. The catalysed reaction is L-methionine + ATP + H2O = S-adenosyl-L-methionine + phosphate + diphosphate. It functions in the pathway amino-acid biosynthesis; S-adenosyl-L-methionine biosynthesis; S-adenosyl-L-methionine from L-methionine: step 1/1. In terms of biological role, catalyzes the formation of S-adenosylmethionine from methionine and ATP. The reaction comprises two steps that are both catalyzed by the same enzyme: formation of S-adenosylmethionine (AdoMet) and triphosphate, and subsequent hydrolysis of the triphosphate. The sequence is that of S-adenosylmethionine synthase (METK) from Musa acuminata (Banana).